A 304-amino-acid polypeptide reads, in one-letter code: Porphobilinogen deaminase (304 aa).

An S-(dipyrrolylmethanemethyl)cysteine modification is found at Cys-241.

This sequence belongs to the HMBS family. As to quaternary structure, monomer. The cofactor is dipyrromethane.

It catalyses the reaction 4 porphobilinogen + H2O = hydroxymethylbilane + 4 NH4(+). The protein operates within porphyrin-containing compound metabolism; protoporphyrin-IX biosynthesis; coproporphyrinogen-III from 5-aminolevulinate: step 2/4. Functionally, tetrapolymerization of the monopyrrole PBG into the hydroxymethylbilane pre-uroporphyrinogen in several discrete steps. The protein is Porphobilinogen deaminase of Vesicomyosocius okutanii subsp. Calyptogena okutanii (strain HA).